The following is a 130-amino-acid chain: Fluoride-specific ion channel FluC (130 aa).

A run of 4 helical transmembrane segments spans residues 2–22, 36–56, 71–91, and 100–120; these read GLLL…RFAL, GILL…AFLI, FLLV…SLDI, and IFIA…AVIL. Na(+) contacts are provided by Gly79 and Thr82.

Belongs to the fluoride channel Fluc/FEX (TC 1.A.43) family.

It localises to the cell inner membrane. The catalysed reaction is fluoride(in) = fluoride(out). With respect to regulation, na(+) is not transported, but it plays an essential structural role and its presence is essential for fluoride channel function. Its function is as follows. Fluoride-specific ion channel. Important for reducing fluoride concentration in the cell, thus reducing its toxicity. This is Fluoride-specific ion channel FluC from Francisella tularensis subsp. mediasiatica (strain FSC147).